Reading from the N-terminus, the 584-residue chain is Interferon regulatory factor 2-binding protein 1 (584 aa).

Residues His-59–Arg-120 are disordered. Ser-66 carries the post-translational modification Phosphoserine. Over residues Ser-82–Ser-100 the composition is skewed to low complexity. Ser-125 is modified (phosphoserine). Arg-177 bears the Omega-N-methylarginine mark. A Phosphoserine modification is found at Ser-186. Residues Glu-197–Gly-217 adopt a coiled-coil conformation. Residue Lys-227 forms a Glycyl lysine isopeptide (Lys-Gly) (interchain with G-Cter in SUMO2) linkage. Disordered stretches follow at residues Pro-346–Ser-421 and Leu-433–Ala-495. The segment covering Tyr-354 to Ala-369 has biased composition (pro residues). 4 positions are modified to phosphoserine: Ser-371, Ser-384, Ser-421, and Ser-436. A Glycyl lysine isopeptide (Lys-Gly) (interchain with G-Cter in SUMO2) cross-link involves residue Lys-438. The segment covering Ala-449–Ser-458 has biased composition (low complexity). Residues Ser-453 and Ser-457 each carry the phosphoserine modification. An RING-type; degenerate zinc finger spans residues Cys-503–Asp-550. Residues Cys-503–Asp-550 form a cys-rich region.

It belongs to the IRF2BP family. As to quaternary structure, interacts with IRF2. Part of a corepressor complex containing IRF2 and IRF2BP2. Interacts with JDP2.

Its subcellular location is the nucleus. It carries out the reaction S-ubiquitinyl-[E2 ubiquitin-conjugating enzyme]-L-cysteine + [acceptor protein]-L-lysine = [E2 ubiquitin-conjugating enzyme]-L-cysteine + N(6)-ubiquitinyl-[acceptor protein]-L-lysine.. Acts as a transcriptional corepressor in a IRF2-dependent manner; this repression is not mediated by histone deacetylase activities. May act as an E3 ligase towards JDP2, enhancing its polyubiquitination. Represses ATF2-dependent transcriptional activation. This chain is Interferon regulatory factor 2-binding protein 1 (Irf2bp1), found in Mus musculus (Mouse).